Here is a 319-residue protein sequence, read N- to C-terminus: Beta-ketoacyl-[acyl-carrier-protein] synthase III (319 aa).

Catalysis depends on residues Cys-112 and His-246. The segment at Gln-247–Arg-251 is ACP-binding. Residue Asn-276 is part of the active site.

It belongs to the thiolase-like superfamily. FabH family. In terms of assembly, homodimer.

It is found in the cytoplasm. The catalysed reaction is malonyl-[ACP] + acetyl-CoA + H(+) = 3-oxobutanoyl-[ACP] + CO2 + CoA. The protein operates within lipid metabolism; fatty acid biosynthesis. In terms of biological role, catalyzes the condensation reaction of fatty acid synthesis by the addition to an acyl acceptor of two carbons from malonyl-ACP. Catalyzes the first condensation reaction which initiates fatty acid synthesis and may therefore play a role in governing the total rate of fatty acid production. Possesses both acetoacetyl-ACP synthase and acetyl transacylase activities. Its substrate specificity determines the biosynthesis of branched-chain and/or straight-chain of fatty acids. This Pseudoalteromonas atlantica (strain T6c / ATCC BAA-1087) protein is Beta-ketoacyl-[acyl-carrier-protein] synthase III.